The sequence spans 917 residues: Hexokinase-1 (917 aa).

At methionine 1 the chain carries N-acetylmethionine. The segment at 1–10 (MIAAQLLAYY) is mitochondrial-binding peptide (MBP). Hexokinase domains lie at 16–458 (DDQV…MVTA) and 464–906 (AEQH…LITA). ATP-binding positions include arginine 30 and 84-89 (DLGGSS). The segment at 73-207 (DGSEKGDFIA…DYDANIVAVV (135 aa)) is hexokinase small subdomain 1. D-glucose 6-phosphate is bound at residue 84–91 (DLGGSSFR). D-glucose contacts are provided by residues serine 155, 172 to 173 (TK), and 208 to 209 (ND). Positions 208–447 (NDTVGTMMTC…SDVRFLLSES (240 aa)) are hexokinase large subdomain 1. Positions 209 and 232 each coordinate D-glucose 6-phosphate. D-glucose-binding positions include asparagine 235, glutamate 260, and 291–294 (QLFE). A Phosphoserine modification is found at serine 337. Residue asparagine 345 coordinates ATP. 413-415 (DGS) is a D-glucose 6-phosphate binding site. 425-426 (RR) serves as a coordination point for ATP. Residues serine 449 and 532–536 (DLGGT) each bind D-glucose 6-phosphate. The interval 521–655 (DGTENGDFLA…EFDLDVVAVV (135 aa)) is hexokinase small subdomain 2. 532–537 (DLGGTN) lines the ATP pocket. Residues 603–604 (SF), 620–621 (TK), and 656–657 (ND) each bind D-glucose. Residues 656–895 (NDTVGTMMTC…CNVSFLLSED (240 aa)) form a hexokinase large subdomain 2 region. Aspartate 657 and threonine 680 together coordinate D-glucose 6-phosphate. Position 680 (threonine 680) interacts with ATP. D-glucose contacts are provided by residues 682–683 (SN), glutamate 708, and glutamate 742. Residues 747-748 (GM), 784-788 (TKFLS), and 863-867 (TLYKL) contribute to the ATP site. D-glucose 6-phosphate-binding positions include 861–863 (DGT) and serine 897.

Belongs to the hexokinase family. Monomer. Interacts with RABL2/RABL2A; binds preferentially to GTP-bound RABL2. Interacts with VDAC1. The HK1-VDAC1 complex interacts with ATF2. Interacts (via N-terminal spermatogenic cell-specific region) with PFKM (via C-terminus). Interacts with SMAD5.

It localises to the mitochondrion outer membrane. Its subcellular location is the cytoplasm. The protein localises to the cytosol. It carries out the reaction a D-hexose + ATP = a D-hexose 6-phosphate + ADP + H(+). It catalyses the reaction D-fructose + ATP = D-fructose 6-phosphate + ADP + H(+). The enzyme catalyses D-glucose + ATP = D-glucose 6-phosphate + ADP + H(+). The catalysed reaction is D-mannose + ATP = D-mannose 6-phosphate + ADP + H(+). It carries out the reaction D-glucosamine + ATP = D-glucosamine 6-phosphate + ADP + H(+). Its pathway is carbohydrate metabolism; hexose metabolism. It functions in the pathway carbohydrate degradation; glycolysis; D-glyceraldehyde 3-phosphate and glycerone phosphate from D-glucose: step 1/4. Hexokinase is an allosteric enzyme inhibited by its product D-glucose 6-phosphate. Hexokinase activity is inhibited by N-acetyl-D-glucosamine. Functionally, catalyzes the phosphorylation of various hexoses, such as D-glucose, D-glucosamine, D-fructose, D-mannose and 2-deoxy-D-glucose, to hexose 6-phosphate (D-glucose 6-phosphate, D-glucosamine 6-phosphate, D-fructose 6-phosphate, D-mannose 6-phosphate and 2-deoxy-D-glucose 6-phosphate, respectively). Does not phosphorylate N-acetyl-D-glucosamine. Mediates the initial step of glycolysis by catalyzing phosphorylation of D-glucose to D-glucose 6-phosphate. Involved in innate immunity and inflammation by acting as a pattern recognition receptor for bacterial peptidoglycan. When released in the cytosol, N-acetyl-D-glucosamine component of bacterial peptidoglycan inhibits the hexokinase activity of HK1 and causes its dissociation from mitochondrial outer membrane, thereby activating the NLRP3 inflammasome. In Pongo abelii (Sumatran orangutan), this protein is Hexokinase-1.